Here is a 156-residue protein sequence, read N- to C-terminus: Dihydrofolate reductase (156 aa).

Residues 1–156 (MLKLIWCQTL…VNYYSNKKEK (156 aa)) form the DHFR domain.

It belongs to the dihydrofolate reductase family.

The enzyme catalyses (6S)-5,6,7,8-tetrahydrofolate + NADP(+) = 7,8-dihydrofolate + NADPH + H(+). The protein operates within cofactor biosynthesis; tetrahydrofolate biosynthesis; 5,6,7,8-tetrahydrofolate from 7,8-dihydrofolate: step 1/1. Functionally, key enzyme in folate metabolism. Catalyzes an essential reaction for de novo glycine and purine synthesis, and for DNA precursor synthesis. The polypeptide is Dihydrofolate reductase (folA) (Ureaplasma parvum serovar 3 (strain ATCC 700970)).